Consider the following 1703-residue polypeptide: Gingipain R1 (1703 aa).

Residues 1-20 (MNKFVSIALCSSLLGGMAFA) form the signal peptide. Positions 21–224 (QQTELGRNPN…RMFMNYEPGR (204 aa)) are excised as a propeptide. Residues Asp302, Val324, Asp327, Tyr329, Glu331, Glu385, and His390 each contribute to the Ca(2+) site. Residue His435 is the Proton donor of the active site. Cys468 (nucleophile) is an active-site residue. Residues Phe473, Glu482, Asp516, Glu517, Glu520, and His526 each coordinate Ca(2+). Residues 940–968 (WDAPNGTPNPNPNPNPNPNPGTTTLSESF) form a disordered region. Residues 946–958 (TPNPNPNPNPNPN) show a composition bias toward pro residues.

The protein belongs to the peptidase C25 family.

It localises to the secreted. The catalysed reaction is Hydrolysis of proteins and small molecule substrates, with a preference for Arg in P1.. Its function is as follows. Thiol protease. Acts synergistically with RgpB to catalyze the maturation of fimbrial subunits, such as FimA. Its proteolytic activity is a major factor in both periodontal tissue destruction and in evasion of host defense mechanisms. The polypeptide is Gingipain R1 (Porphyromonas gingivalis (strain ATCC 33277 / DSM 20709 / CIP 103683 / JCM 12257 / NCTC 11834 / 2561)).